The chain runs to 199 residues: dITP/XTP pyrophosphatase (199 aa).

Substrate is bound at residue 7 to 12 (TGNAGK). The Proton acceptor role is filled by D68. D68 is a binding site for Mg(2+). Residues S69, 153 to 156 (FGYD), K176, and 181 to 182 (HR) contribute to the substrate site.

It belongs to the HAM1 NTPase family. In terms of assembly, homodimer. Requires Mg(2+) as cofactor.

The enzyme catalyses XTP + H2O = XMP + diphosphate + H(+). It carries out the reaction dITP + H2O = dIMP + diphosphate + H(+). The catalysed reaction is ITP + H2O = IMP + diphosphate + H(+). Pyrophosphatase that catalyzes the hydrolysis of nucleoside triphosphates to their monophosphate derivatives, with a high preference for the non-canonical purine nucleotides XTP (xanthosine triphosphate), dITP (deoxyinosine triphosphate) and ITP. Seems to function as a house-cleaning enzyme that removes non-canonical purine nucleotides from the nucleotide pool, thus preventing their incorporation into DNA/RNA and avoiding chromosomal lesions. The sequence is that of dITP/XTP pyrophosphatase from Halorhodospira halophila (strain DSM 244 / SL1) (Ectothiorhodospira halophila (strain DSM 244 / SL1)).